A 388-amino-acid polypeptide reads, in one-letter code: Mannitol-1-phosphate 5-dehydrogenase (388 aa).

A3–G14 provides a ligand contact to NAD(+).

Belongs to the mannitol dehydrogenase family.

It catalyses the reaction D-mannitol 1-phosphate + NAD(+) = beta-D-fructose 6-phosphate + NADH + H(+). The polypeptide is Mannitol-1-phosphate 5-dehydrogenase (Buchnera aphidicola subsp. Schizaphis graminum (strain Sg)).